The following is a 55-amino-acid chain: Large ribosomal subunit protein bL32 (55 aa).

Basic residues predominate over residues 1–19 (MAVPKFKKSRANTRARRSQ). The tract at residues 1 to 22 (MAVPKFKKSRANTRARRSQWKA) is disordered.

It belongs to the bacterial ribosomal protein bL32 family.

This Corynebacterium urealyticum (strain ATCC 43042 / DSM 7109) protein is Large ribosomal subunit protein bL32.